Consider the following 718-residue polypeptide: Polyribonucleotide nucleotidyltransferase (718 aa).

Mg(2+) contacts are provided by aspartate 496 and aspartate 502. Residues 563–622 enclose the KH domain; sequence PRLLTIKIDPDMIGLVIGPGGKTIKGITEETGAKIDIEDDGTVTISAVDENKAKRARNIV. The S1 motif domain maps to 632-700; sequence GDVYAGRVTR…NKGRINLTRL (69 aa).

The protein belongs to the polyribonucleotide nucleotidyltransferase family. Requires Mg(2+) as cofactor.

The protein localises to the cytoplasm. The enzyme catalyses RNA(n+1) + phosphate = RNA(n) + a ribonucleoside 5'-diphosphate. Its function is as follows. Involved in mRNA degradation. Catalyzes the phosphorolysis of single-stranded polyribonucleotides processively in the 3'- to 5'-direction. The sequence is that of Polyribonucleotide nucleotidyltransferase from Trichormus variabilis (strain ATCC 29413 / PCC 7937) (Anabaena variabilis).